Consider the following 428-residue polypeptide: Diaminopimelate decarboxylase (428 aa).

Residue K64 is modified to N6-(pyridoxal phosphate)lysine. Residues G239 and 281 to 284 contribute to the pyridoxal 5'-phosphate site; that span reads EPGR. Positions 284, 319, and 323 each coordinate substrate. The Proton donor role is filled by C350. Substrate is bound by residues E351 and Y379. Y379 contributes to the pyridoxal 5'-phosphate binding site.

Belongs to the Orn/Lys/Arg decarboxylase class-II family. LysA subfamily. Homodimer. Pyridoxal 5'-phosphate serves as cofactor.

The catalysed reaction is meso-2,6-diaminopimelate + H(+) = L-lysine + CO2. Its pathway is amino-acid biosynthesis; L-lysine biosynthesis via DAP pathway; L-lysine from DL-2,6-diaminopimelate: step 1/1. Specifically catalyzes the decarboxylation of meso-diaminopimelate (meso-DAP) to L-lysine. This chain is Diaminopimelate decarboxylase, found in Methanothermobacter thermautotrophicus (strain ATCC 29096 / DSM 1053 / JCM 10044 / NBRC 100330 / Delta H) (Methanobacterium thermoautotrophicum).